The following is a 222-amino-acid chain: Uracil-DNA glycosylase (222 aa).

Residue aspartate 61 is the Proton acceptor of the active site.

Belongs to the uracil-DNA glycosylase (UDG) superfamily. UNG family.

It localises to the cytoplasm. The catalysed reaction is Hydrolyzes single-stranded DNA or mismatched double-stranded DNA and polynucleotides, releasing free uracil.. Functionally, excises uracil residues from the DNA which can arise as a result of misincorporation of dUMP residues by DNA polymerase or due to deamination of cytosine. The sequence is that of Uracil-DNA glycosylase from Actinobacillus succinogenes (strain ATCC 55618 / DSM 22257 / CCUG 43843 / 130Z).